The primary structure comprises 123 residues: UPF0102 protein Pput_4400 (123 aa).

It belongs to the UPF0102 family.

The chain is UPF0102 protein Pput_4400 from Pseudomonas putida (strain ATCC 700007 / DSM 6899 / JCM 31910 / BCRC 17059 / LMG 24140 / F1).